Consider the following 498-residue polypeptide: ATP synthase subunit beta, chloroplastic (498 aa).

172–179 contributes to the ATP binding site; sequence GGAGVGKT.

Belongs to the ATPase alpha/beta chains family. As to quaternary structure, F-type ATPases have 2 components, CF(1) - the catalytic core - and CF(0) - the membrane proton channel. CF(1) has five subunits: alpha(3), beta(3), gamma(1), delta(1), epsilon(1). CF(0) has four main subunits: a(1), b(1), b'(1) and c(9-12).

Its subcellular location is the plastid. The protein localises to the chloroplast thylakoid membrane. The catalysed reaction is ATP + H2O + 4 H(+)(in) = ADP + phosphate + 5 H(+)(out). Functionally, produces ATP from ADP in the presence of a proton gradient across the membrane. The catalytic sites are hosted primarily by the beta subunits. The sequence is that of ATP synthase subunit beta, chloroplastic from Daucus carota (Wild carrot).